Consider the following 201-residue polypeptide: Proteasome subunit beta type-2 (201 aa).

Met-1 carries the N-acetylmethionine modification.

Belongs to the peptidase T1B family. The 26S proteasome consists of a 20S proteasome core and two 19S regulatory subunits. The 20S proteasome core is a barrel-shaped complex made of 28 subunits that are arranged in four stacked rings. The two outer rings are each formed by seven alpha subunits, and the two inner rings are formed by seven beta subunits. The proteolytic activity is exerted by three beta-subunits PSMB5, PSMB6 and PSMB7. As to expression, detected in liver (at protein level).

The protein resides in the cytoplasm. It is found in the nucleus. Functionally, non-catalytic component of the 20S core proteasome complex involved in the proteolytic degradation of most intracellular proteins. This complex plays numerous essential roles within the cell by associating with different regulatory particles. Associated with two 19S regulatory particles, forms the 26S proteasome and thus participates in the ATP-dependent degradation of ubiquitinated proteins. The 26S proteasome plays a key role in the maintenance of protein homeostasis by removing misfolded or damaged proteins that could impair cellular functions, and by removing proteins whose functions are no longer required. Associated with the PA200 or PA28, the 20S proteasome mediates ubiquitin-independent protein degradation. This type of proteolysis is required in several pathways including spermatogenesis (20S-PA200 complex) or generation of a subset of MHC class I-presented antigenic peptides (20S-PA28 complex). The polypeptide is Proteasome subunit beta type-2 (Psmb2) (Mus musculus (Mouse)).